The primary structure comprises 328 residues: MYVPGIAENLCLDIFHKQKQVISQYFASFHYDCVHQLTEKLLCHQGSLFFSGIGKSGCIARKLVATMQSFGEKAFFLSGDLLHGDLGVVSPGDIVCLFSNSGETREILEWIPHLKNRPVFLVGITAAPCSSLAAFSDFVIVLPKLEELDPFNLMPTTSTTCQLLFSDLLAMTLLRCRKISLSDYGSNHPSGQIGLKANGKVKDYLYPRTEVPFCSPLTTVAESLPTLSSYGYGCVCVVNELFELLGIFTDGDLRRGLSEYGGDILAYPLQQIMTRNPKVISEDSDVLLSLEMMESGNPVTVLPVVDAQQQRFIVGLLHMHALARAGLL.

The SIS domain maps to 37–179; it reads LTEKLLCHQG…AMTLLRCRKI (143 aa). 52 to 57 is a binding site for ATP; the sequence is GIGKSG. 2 CBS domains span residues 207–264 and 273–328; these read PRTE…GGDI and MTRN…AGLL.

Belongs to the SIS family. GutQ/KpsF subfamily.

This is an uncharacterized protein from Chlamydia trachomatis serovar D (strain ATCC VR-885 / DSM 19411 / UW-3/Cx).